We begin with the raw amino-acid sequence, 127 residues long: Small ribosomal subunit protein bS16 (127 aa).

Positions 80 to 127 are disordered; that stretch reads GLKKRPTRNNPHKGEPGKKAQERIAAAKQAAEEAAAAKTESAPISEEV. The segment covering 81-90 has biased composition (basic residues); it reads LKKRPTRNNP. Residues 91 to 101 are compositionally biased toward basic and acidic residues; it reads HKGEPGKKAQE. The span at 102–121 shows a compositional bias: low complexity; sequence RIAAAKQAAEEAAAAKTESA.

It belongs to the bacterial ribosomal protein bS16 family.

The polypeptide is Small ribosomal subunit protein bS16 (Bartonella henselae (strain ATCC 49882 / DSM 28221 / CCUG 30454 / Houston 1) (Rochalimaea henselae)).